Reading from the N-terminus, the 177-residue chain is MSDDASTLLRTISWFTEPPSVLPEHIGDWLMETSSMTQRLEKYCAQLRVTLCREGFITPQMLGEERDQLPADERYWLREVVLYGDDRPWLFGRTIVPQQTLEGSGAALTKIGNQPLGRYLFEQKSLTRDYIHTGCCEGLWARRSRLCLSGHPLLLTELFLPESPVYYTPGDEGWQVI.

4 residues coordinate substrate: Met36, Arg78, Leu116, and Glu157.

It belongs to the UbiC family. As to quaternary structure, monomer.

The protein localises to the cytoplasm. The enzyme catalyses chorismate = 4-hydroxybenzoate + pyruvate. It functions in the pathway cofactor biosynthesis; ubiquinone biosynthesis. Its function is as follows. Removes the pyruvyl group from chorismate, with concomitant aromatization of the ring, to provide 4-hydroxybenzoate (4HB) for the ubiquinone pathway. This Pectobacterium atrosepticum (strain SCRI 1043 / ATCC BAA-672) (Erwinia carotovora subsp. atroseptica) protein is Chorismate pyruvate-lyase.